A 748-amino-acid polypeptide reads, in one-letter code: NAD(P)H-quinone oxidoreductase subunit 5, chloroplastic (748 aa).

A run of 16 helical transmembrane segments spans residues 9 to 29 (WIIPFISLPIPILIGVGLLLF), 40 to 60 (WSFPSILLLSIVMIFAVYLSI), 89 to 109 (IDPLTCIMAILITTVGIMVLI), 125 to 145 (FAYMSLFNTSMLGLVTSSNLI), 147 to 167 (IYIFWELVGMCSYLLIGFWFT), 185 to 205 (GDFGLLLGILGLYWTTGSFEF), 219 to 239 (NEVNFLFLTLCAVLLFAGAVA), 258 to 278 (TPISALIHAATMVAAGIFLVA), 280 to 300 (LLPLFIAIPYIMNLIALIGII), 327 to 347 (LGYMMLALGMGSYQAALFHLI), 354 to 374 (ALLFLGSGSIIHSMESVVGYS), 396 to 416 (NAFLLGTLSLCGVPPLACFWS), 425 to 445 (WLYSPIFAIIACSTAGLTAFY), 550 to 570 (LFPMFVLSLFTLFVGVIGSPF), 611 to 631 (ATFSVTIAFFGIFIASFFYKP), and 728 to 748 (YILLYLVYLVIFILVIYFVFF).

Belongs to the complex I subunit 5 family. As to quaternary structure, NDH is composed of at least 16 different subunits, 5 of which are encoded in the nucleus.

The protein localises to the plastid. The protein resides in the chloroplast thylakoid membrane. It carries out the reaction a plastoquinone + NADH + (n+1) H(+)(in) = a plastoquinol + NAD(+) + n H(+)(out). It catalyses the reaction a plastoquinone + NADPH + (n+1) H(+)(in) = a plastoquinol + NADP(+) + n H(+)(out). NDH shuttles electrons from NAD(P)H:plastoquinone, via FMN and iron-sulfur (Fe-S) centers, to quinones in the photosynthetic chain and possibly in a chloroplast respiratory chain. The immediate electron acceptor for the enzyme in this species is believed to be plastoquinone. Couples the redox reaction to proton translocation, and thus conserves the redox energy in a proton gradient. In Cucumis sativus (Cucumber), this protein is NAD(P)H-quinone oxidoreductase subunit 5, chloroplastic (ndhF).